The chain runs to 448 residues: MAKHRYLPMTEQDEKEMLDVIGVKSIDDLFQDIPEKIRFKRDYDLKPAKSEPALLRELSQLASKNANTTEYASFLGAGVYSHYIPTVVDHVISRSEFYTAYTPYQPEISQGELQAIFEFQTMIAELTGMDLANSSMYDGGTALAEAAMLASGHTKRKKILISGAVHPESSNVLKTYATGQHIEVEVIPELDGKTDIEALKKALSDDIAGFVVQYPNFYGQVEPLAELEKLVHENNSLLLVSSNPLSLGLLTPPGEFGADIVVGDSQVFGIPESFGGPHCGFFAVTNKLMRKVPGRLVGETVDENGKRGYVLTLQAREQHIRRDKATSNICSNQALNALASSVAMATLGKTGLVEMAKQNLDKSHYAKQKFREKGFEVLFSDGFFNEFVVKLSKPIKEVNESLLDEGIIGGYDLGFYEEKYENHMLVAVTEMRTKEEIDAFVASLEGAK.

The protein belongs to the GcvP family. N-terminal subunit subfamily. As to quaternary structure, the glycine cleavage system is composed of four proteins: P, T, L and H. In this organism, the P 'protein' is a heterodimer of two subunits.

It carries out the reaction N(6)-[(R)-lipoyl]-L-lysyl-[glycine-cleavage complex H protein] + glycine + H(+) = N(6)-[(R)-S(8)-aminomethyldihydrolipoyl]-L-lysyl-[glycine-cleavage complex H protein] + CO2. In terms of biological role, the glycine cleavage system catalyzes the degradation of glycine. The P protein binds the alpha-amino group of glycine through its pyridoxal phosphate cofactor; CO(2) is released and the remaining methylamine moiety is then transferred to the lipoamide cofactor of the H protein. The protein is Probable glycine dehydrogenase (decarboxylating) subunit 1 of Listeria monocytogenes serotype 4b (strain CLIP80459).